A 117-amino-acid polypeptide reads, in one-letter code: Large ribosomal subunit protein uL18 (117 aa).

It belongs to the universal ribosomal protein uL18 family. Part of the 50S ribosomal subunit; part of the 5S rRNA/L5/L18/L25 subcomplex. Contacts the 5S and 23S rRNAs.

Functionally, this is one of the proteins that bind and probably mediate the attachment of the 5S RNA into the large ribosomal subunit, where it forms part of the central protuberance. The protein is Large ribosomal subunit protein uL18 of Methylococcus capsulatus (strain ATCC 33009 / NCIMB 11132 / Bath).